A 195-amino-acid polypeptide reads, in one-letter code: Large ribosomal subunit protein bL25 (195 aa).

The protein belongs to the bacterial ribosomal protein bL25 family. CTC subfamily. Part of the 50S ribosomal subunit; part of the 5S rRNA/L5/L18/L25 subcomplex. Contacts the 5S rRNA. Binds to the 5S rRNA independently of L5 and L18.

In terms of biological role, this is one of the proteins that binds to the 5S RNA in the ribosome where it forms part of the central protuberance. The sequence is that of Large ribosomal subunit protein bL25 from Chlorobium chlorochromatii (strain CaD3).